Consider the following 195-residue polypeptide: ATP-dependent Clp protease proteolytic subunit (195 aa).

Residue Ser-98 is the Nucleophile of the active site. His-123 is a catalytic residue.

The protein belongs to the peptidase S14 family. In terms of assembly, fourteen ClpP subunits assemble into 2 heptameric rings which stack back to back to give a disk-like structure with a central cavity, resembling the structure of eukaryotic proteasomes.

It localises to the cytoplasm. The catalysed reaction is Hydrolysis of proteins to small peptides in the presence of ATP and magnesium. alpha-casein is the usual test substrate. In the absence of ATP, only oligopeptides shorter than five residues are hydrolyzed (such as succinyl-Leu-Tyr-|-NHMec, and Leu-Tyr-Leu-|-Tyr-Trp, in which cleavage of the -Tyr-|-Leu- and -Tyr-|-Trp bonds also occurs).. Cleaves peptides in various proteins in a process that requires ATP hydrolysis. Has a chymotrypsin-like activity. Plays a major role in the degradation of misfolded proteins. The protein is ATP-dependent Clp protease proteolytic subunit of Helicobacter pylori (strain G27).